A 203-amino-acid chain; its full sequence is Transmembrane emp24 domain-containing protein (203 aa).

The signal sequence occupies residues 1-22 (MASIRLLPSCIVLMFLARSSLC). Topologically, residues 23-170 (YFITIDAHGE…RSINDNTNSR (148 aa)) are lumenal. Residues 32–114 (EECFHDKVTS…PKVLKFSMDI (83 aa)) form the GOLD domain. A helical membrane pass occupies residues 171–191 (VVWWSFFESLVLVAMTLGQVY). Over 192–203 (YLKRFFEVRRVV) the chain is Cytoplasmic.

This sequence belongs to the EMP24/GP25L family.

The protein localises to the cytoplasmic vesicle membrane. In terms of biological role, could have a role in the budding of coatomer-coated and other species of coated vesicles. This chain is Transmembrane emp24 domain-containing protein, found in Nematostella vectensis (Starlet sea anemone).